We begin with the raw amino-acid sequence, 713 residues long: Metal transporter CNNM3 (713 aa).

A helical transmembrane segment spans residues 7 to 29 (AVVGWLGWVLAAFCLGSTAGEAA). Asn73 is a glycosylation site (N-linked (GlcNAc...) asparagine). The region spanning 136-314 (EAAPPWALGL…DPYSDLSKGV (179 aa)) is the CNNM transmembrane domain. Helical transmembrane passes span 137 to 157 (AAPPWALGLGAAGLLALAAVA), 199 to 219 (CALGALLLLASLAQAALAVLL), 227 to 247 (AVPAVLGCAGLVFLVGEVLPA), and 267 to 287 (LAVLLTLPVALPVGQLLELAA). 2 consecutive CBS domains span residues 324-385 (LTPL…CTPL) and 392-458 (YNHP…ILDE). The tract at residues 664-713 (LPPSPENAELQAIPGSQTRLLGDKSRETAGSTNSRPSIPVEESPGRNPGV) is disordered. A phosphoserine mark is found at Ser667 and Ser706.

The protein belongs to the ACDP family. As to expression, widely expressed with highest levels in brain, kidney, liver, lung and heart.

It localises to the cell membrane. Probable metal transporter. This is Metal transporter CNNM3 (Cnnm3) from Mus musculus (Mouse).